The following is a 616-amino-acid chain: KIF-binding protein (616 aa).

The segment at 52 to 78 (EEEEESEAEGKEERRDGPESGGRRGES) is disordered. Positions 59 to 78 (AEGKEERRDGPESGGRRGES) are enriched in basic and acidic residues.

Belongs to the KIF-binding protein family.

It is found in the cytoplasm. Its subcellular location is the cytoskeleton. In terms of biological role, activator of KIF1B plus-end-directed microtubule motor activity. Required for organization of axonal microtubules, and axonal outgrowth and maintenance during peripheral and central nervous system development. The protein is KIF-binding protein of Xenopus tropicalis (Western clawed frog).